Consider the following 279-residue polypeptide: Energy-coupling factor transporter ATP-binding protein EcfA1 (279 aa).

An ABC transporter domain is found at 5–240; the sequence is IELKKVTFNY…GDELLQLGLD (236 aa). ATP is bound at residue 40–47; sequence GHNGSGKS.

The protein belongs to the ABC transporter superfamily. Energy-coupling factor EcfA family. In terms of assembly, forms a stable energy-coupling factor (ECF) transporter complex composed of 2 membrane-embedded substrate-binding proteins (S component), 2 ATP-binding proteins (A component) and 2 transmembrane proteins (T component).

The protein localises to the cell membrane. In terms of biological role, ATP-binding (A) component of a common energy-coupling factor (ECF) ABC-transporter complex. Unlike classic ABC transporters this ECF transporter provides the energy necessary to transport a number of different substrates. The protein is Energy-coupling factor transporter ATP-binding protein EcfA1 of Streptococcus pyogenes serotype M12 (strain MGAS2096).